The primary structure comprises 138 residues: ATP synthase epsilon chain (138 aa).

The span at 89 to 114 shows a compositional bias: basic and acidic residues; the sequence is KDTAQQEWNEAQKRLDEASKSGDRQK. A disordered region spans residues 89-117; it reads KDTAQQEWNEAQKRLDEASKSGDRQKQIQ.

This sequence belongs to the ATPase epsilon chain family. As to quaternary structure, F-type ATPases have 2 components, CF(1) - the catalytic core - and CF(0) - the membrane proton channel. CF(1) has five subunits: alpha(3), beta(3), gamma(1), delta(1), epsilon(1). CF(0) has three main subunits: a, b and c.

Its subcellular location is the cellular thylakoid membrane. Produces ATP from ADP in the presence of a proton gradient across the membrane. This chain is ATP synthase epsilon chain, found in Gloeothece citriformis (strain PCC 7424) (Cyanothece sp. (strain PCC 7424)).